A 146-amino-acid polypeptide reads, in one-letter code: Type II secretion system core protein G (146 aa).

Positions 1-9 (MKKMRKQTG) are cleaved as a propeptide — leader sequence. Residue Phe-10 is modified to N-methylphenylalanine. A helical membrane pass occupies residues 10-30 (FTLLEVMVVVVILGILASFVV).

It belongs to the GSP G family. As to quaternary structure, type II secretion system is composed of four main components: the outer membrane complex, the inner membrane complex, the cytoplasmic secretion ATPase and the periplasm-spanning pseudopilus. Forms homomultimers. Interacts with EspL. In terms of processing, cleaved by the prepilin peptidase. Methylated by prepilin peptidase at the amino group of the N-terminal phenylalanine once the leader sequence is cleaved.

It is found in the cell inner membrane. Functionally, core component of the type II secretion system required for the energy-dependent secretion of extracellular factors such as proteases and toxins from the periplasm. Pseudopilin (pilin-like) protein that polymerizes to form the pseudopilus. Further polymerization triggers pseudopilus growth. The polypeptide is Type II secretion system core protein G (epsG) (Vibrio cholerae serotype O1 (strain ATCC 39315 / El Tor Inaba N16961)).